The primary structure comprises 235 residues: tRNA (guanine-N(1)-)-methyltransferase (235 aa).

Residues Gly-114 and 134 to 139 (VGDYIL) contribute to the S-adenosyl-L-methionine site.

This sequence belongs to the RNA methyltransferase TrmD family. As to quaternary structure, homodimer.

Its subcellular location is the cytoplasm. The enzyme catalyses guanosine(37) in tRNA + S-adenosyl-L-methionine = N(1)-methylguanosine(37) in tRNA + S-adenosyl-L-homocysteine + H(+). Functionally, specifically methylates guanosine-37 in various tRNAs. This chain is tRNA (guanine-N(1)-)-methyltransferase, found in Chelativorans sp. (strain BNC1).